Consider the following 97-residue polypeptide: Small ribosomal subunit protein bS6 (97 aa).

It belongs to the bacterial ribosomal protein bS6 family.

Binds together with bS18 to 16S ribosomal RNA. The chain is Small ribosomal subunit protein bS6 (rpsF) from Lactococcus lactis subsp. lactis (strain IL1403) (Streptococcus lactis).